Consider the following 116-residue polypeptide: Venom nerve growth factor (116 aa).

3 disulfides stabilise this stretch: cysteine 14-cysteine 78, cysteine 56-cysteine 106, and cysteine 66-cysteine 108. Residue lysine 86 participates in a 1,2-diacyl-sn-glycerol binding.

It belongs to the NGF-beta family. As to quaternary structure, homodimer; non-covalently linked. Interacts with NTRK1. Post-translationally, not glycosylated. As to expression, expressed by the venom gland.

It localises to the secreted. Functionally, nerve growth factor is important for the development and maintenance of the sympathetic and sensory nervous systems. It stimulates division and differentiation of sympathetic and embryonic sensory neurons as well as basal forebrain cholinergic neurons in the brain. Its relevance in the snake venom is not clear. However, it has been shown to inhibit metalloproteinase-dependent proteolysis of platelet glycoprotein Ib alpha, suggesting a metalloproteinase inhibition to prevent metalloprotease autodigestion and/or protection against prey proteases. Binds a lipid between the two protein chains in the homodimer. The lipid-bound form promotes histamine relase from mouse mast cells, contrary to the lipid-free form. The protein is Venom nerve growth factor of Naja atra (Chinese cobra).